A 105-amino-acid polypeptide reads, in one-letter code: Putative membrane protein insertion efficiency factor (105 aa).

The segment at glycine 76–arginine 105 is disordered. Basic and acidic residues predominate over residues glutamate 90–arginine 105.

Belongs to the UPF0161 family.

The protein resides in the cell inner membrane. In terms of biological role, could be involved in insertion of integral membrane proteins into the membrane. In Chromohalobacter salexigens (strain ATCC BAA-138 / DSM 3043 / CIP 106854 / NCIMB 13768 / 1H11), this protein is Putative membrane protein insertion efficiency factor.